A 587-amino-acid polypeptide reads, in one-letter code: Formate--tetrahydrofolate ligase (587 aa).

Residue 73–80 (TPLGEGKS) coordinates ATP.

The protein belongs to the formate--tetrahydrofolate ligase family.

The enzyme catalyses (6S)-5,6,7,8-tetrahydrofolate + formate + ATP = (6R)-10-formyltetrahydrofolate + ADP + phosphate. It participates in one-carbon metabolism; tetrahydrofolate interconversion. This is Formate--tetrahydrofolate ligase from Syntrophobacter fumaroxidans (strain DSM 10017 / MPOB).